The primary structure comprises 408 residues: Putative UPF0496 protein 2 (408 aa).

Transmembrane regions (helical) follow at residues 224–244 (RIARGTAAAALVGACAAAIVA) and 252–272 (ALVGIGVAAAAFGATPAGAAR). Positions 385–408 (MARGLPPPSPATVTTTSEERLTSS) are disordered.

The protein belongs to the UPF0496 family.

Its subcellular location is the membrane. This chain is Putative UPF0496 protein 2, found in Oryza sativa subsp. indica (Rice).